A 752-amino-acid polypeptide reads, in one-letter code: Multifunctional tryptophan biosynthesis protein (752 aa).

Residues 3-202 (FTLLIDNYDS…IQMKGGKWGG (200 aa)) enclose the Glutamine amidotransferase type-1 domain. 58–60 (GPG) contributes to the L-glutamine binding site. Catalysis depends on cysteine 86, which acts as the Nucleophile; for GATase activity. 136-137 (SL) is a binding site for L-glutamine. Catalysis depends on for GATase activity residues histidine 176 and glutamate 178. Residues 231 to 495 (ILNKIHAQRL…DTKAFLRSLI (265 aa)) form an indole-3-glycerol phosphate synthase region. The tract at residues 509-752 (LVKICGIRST…VEAFVKAVRG (244 aa)) is N-(5'-phosphoribosyl)anthranilate isomerase.

The enzyme catalyses N-(5-phospho-beta-D-ribosyl)anthranilate = 1-(2-carboxyphenylamino)-1-deoxy-D-ribulose 5-phosphate. It carries out the reaction 1-(2-carboxyphenylamino)-1-deoxy-D-ribulose 5-phosphate + H(+) = (1S,2R)-1-C-(indol-3-yl)glycerol 3-phosphate + CO2 + H2O. It catalyses the reaction chorismate + L-glutamine = anthranilate + pyruvate + L-glutamate + H(+). The protein operates within amino-acid biosynthesis; L-tryptophan biosynthesis; L-tryptophan from chorismate: step 1/5. It functions in the pathway amino-acid biosynthesis; L-tryptophan biosynthesis; L-tryptophan from chorismate: step 3/5. Its pathway is amino-acid biosynthesis; L-tryptophan biosynthesis; L-tryptophan from chorismate: step 4/5. In terms of biological role, trifunctional enzyme bearing the Gln amidotransferase (GATase) domain of anthranilate synthase, indole-glycerolphosphate synthase, and phosphoribosylanthranilate isomerase activities. In Cryptococcus neoformans var. grubii serotype A (strain H99 / ATCC 208821 / CBS 10515 / FGSC 9487) (Filobasidiella neoformans var. grubii), this protein is Multifunctional tryptophan biosynthesis protein (TRP1).